The primary structure comprises 97 residues: Co-chaperonin GroES (97 aa).

This sequence belongs to the GroES chaperonin family. In terms of assembly, heptamer of 7 subunits arranged in a ring. Interacts with the chaperonin GroEL.

It localises to the cytoplasm. Its function is as follows. Together with the chaperonin GroEL, plays an essential role in assisting protein folding. The GroEL-GroES system forms a nano-cage that allows encapsulation of the non-native substrate proteins and provides a physical environment optimized to promote and accelerate protein folding. GroES binds to the apical surface of the GroEL ring, thereby capping the opening of the GroEL channel. The polypeptide is Co-chaperonin GroES (Buchnera aphidicola subsp. Tetraneura caerulescens).